The sequence spans 401 residues: Cysteine desulfurase (401 aa).

Pyridoxal 5'-phosphate contacts are provided by residues Ala-72–Thr-73, Asn-151, Gln-179, and Ser-199–His-201. Lys-202 carries the N6-(pyridoxal phosphate)lysine modification. Thr-237 serves as a coordination point for pyridoxal 5'-phosphate. Cys-324 functions as the Cysteine persulfide intermediate in the catalytic mechanism. Cys-324 is a [2Fe-2S] cluster binding site.

It belongs to the class-V pyridoxal-phosphate-dependent aminotransferase family. NifS/IscS subfamily. As to quaternary structure, homodimer. Pyridoxal 5'-phosphate is required as a cofactor.

The enzyme catalyses (sulfur carrier)-H + L-cysteine = (sulfur carrier)-SH + L-alanine. Functionally, catalyzes the removal of elemental sulfur atoms from cysteine to produce alanine. Seems to participate in the biosynthesis of the nitrogenase metalloclusters by providing the inorganic sulfur required for the Fe-S core formation. This is Cysteine desulfurase from Enterobacter agglomerans (Erwinia herbicola).